Here is a 228-residue protein sequence, read N- to C-terminus: Phosphoglycolate phosphatase (228 aa).

Residue aspartate 12 is the Nucleophile of the active site. Residues aspartate 12, aspartate 14, and aspartate 177 each contribute to the Mg(2+) site.

It belongs to the HAD-like hydrolase superfamily. CbbY/CbbZ/Gph/YieH family. It depends on Mg(2+) as a cofactor.

The enzyme catalyses 2-phosphoglycolate + H2O = glycolate + phosphate. It functions in the pathway organic acid metabolism; glycolate biosynthesis; glycolate from 2-phosphoglycolate: step 1/1. Functionally, specifically catalyzes the dephosphorylation of 2-phosphoglycolate. Is involved in the dissimilation of the intracellular 2-phosphoglycolate formed during the DNA repair of 3'-phosphoglycolate ends, a major class of DNA lesions induced by oxidative stress. This chain is Phosphoglycolate phosphatase, found in Vibrio vulnificus (strain YJ016).